The sequence spans 145 residues: Hemoglobin subunit beta (145 aa).

In terms of domain architecture, Globin spans Met-1–His-145. Thr-11 is subject to Phosphothreonine. A Phosphoserine modification is found at Ser-43. Lys-58 bears the N6-acetyllysine mark. Residue His-62 participates in heme b binding. Lys-81 carries the post-translational modification N6-acetyllysine. His-91 lines the heme b pocket. Cys-92 is modified (S-nitrosocysteine).

It belongs to the globin family. As to quaternary structure, heterotetramer of two alpha chains and two beta chains. Red blood cells.

Functionally, involved in oxygen transport from the lung to the various peripheral tissues. This is Hemoglobin subunit beta (HBB) from Tragelaphus strepsiceros (Greater kudu).